A 432-amino-acid chain; its full sequence is Glutamate-gated chloride channel subunit beta (432 aa).

A signal peptide spans 1–18 (MSQYMMVAVAAVVAVAGS). At 19 to 249 (SQISRRSTGG…MQLTLKRQFS (231 aa)) the chain is on the extracellular side. Asn52 carries an N-linked (GlcNAc...) asparagine glycan. Arg69, Arg88, and Ser155 together coordinate L-glutamate. A disulfide bridge connects residues Cys164 and Cys178. Ser184 serves as a coordination point for L-glutamate. Residue Asn219 is glycosylated (N-linked (GlcNAc...) asparagine). A disulfide bridge connects residues Cys226 and Cys237. Residues 250-272 (YYLVQLYGPTTMIVIVSWVSFWI) traverse the membrane as a helical segment. At 273-277 (DMHST) the chain is on the cytoplasmic side. A helical membrane pass occupies residues 278–299 (AGRVALGVTTLLTMTTMQAAIN). Residues 300-306 (AKLPPVS) are Extracellular-facing. A helical transmembrane segment spans residues 307-327 (YVKVVDVWLGACQTFVFGALL). Topologically, residues 328-402 (EYAFVSYQDS…KPDYLPAKID (75 aa)) are cytoplasmic. Residues 403-426 (YYARFCVPLGFLAFNAIYWTSCLV) form a helical membrane-spanning segment. The Extracellular portion of the chain corresponds to 427–432 (MVSRLV).

The protein belongs to the ligand-gated ion channel (TC 1.A.9) family. Glutamate-gated chloride channel (TC 1.A.9.4) subfamily. Pentamer. In terms of tissue distribution, expressed in motor neuron commissures at the anterior portion of the worms.

It localises to the postsynaptic cell membrane. Its subcellular location is the cell membrane. Its function is as follows. Glutamate-gated chloride channel subunit; channel properties may be modulated by the formation of heteromeric channels. Glutamate binding triggers a rapidly reversible current, while the anti-helmintic drug ivermectin triggers a permanently open channel configuration. The sequence is that of Glutamate-gated chloride channel subunit beta from Haemonchus contortus (Barber pole worm).